A 355-amino-acid polypeptide reads, in one-letter code: Chemerin-like receptor 2 (355 aa).

Over 1–41 (MEDLEETLFEEFENYSYDLDYYSLESDLEEKVQLGVVHWVS) the chain is Extracellular. Residue N14 is glycosylated (N-linked (GlcNAc...) asparagine). A helical transmembrane segment spans residues 42–62 (LVLYCLAFVLGIPGNAIVIWF). Residues 63 to 73 (TGFKWKKTVTT) are Cytoplasmic-facing. The chain crosses the membrane as a helical span at residues 74 to 94 (LWFLNLAIADFIFLLFLPLYI). At 95 to 112 (SYVAMNFHWPFGIWLCKA) the chain is on the extracellular side. A disulfide bridge links C110 with C187. The chain crosses the membrane as a helical span at residues 113–133 (NSFTAQLNMFASVFFLTVISL). Residues 134–154 (DHYIHLIHPVLSHRHRTLKNS) lie on the Cytoplasmic side of the membrane. A helical transmembrane segment spans residues 155 to 175 (LIVIIFIWLLASLIGGPALYF). The Extracellular segment spans residues 176-210 (RDTVEFNNHTLCYNNFQKHDPDLTLIRHHVLTWVK). Residues 211–231 (FIIGYLFPLLTMSICYLCLIF) traverse the membrane as a helical segment. Residues 232-247 (KVKKRSILISSRHFWT) are Cytoplasmic-facing. Residues 248 to 268 (ILVVVVAFVVCWTPYHLFSIW) form a helical membrane-spanning segment. Residues 269-286 (ELTIHHNSYSHHVMQAGI) are Extracellular-facing. Residues 287–307 (PLSTGLAFLNSCLNPILYVLI) traverse the membrane as a helical segment. The Cytoplasmic segment spans residues 308 to 355 (SKKFQARFRSSVAEILKYTLWEVSCSGTVSEQLRNSETKNLCLLETAQ).

It belongs to the chemokine-like receptor (CMKLR) family. Expressed in hippocampus.

The protein resides in the cell membrane. Receptor for chemoattractant adipokine chemerin/RARRES2 suggesting a role for this receptor in the regulation of inflammation and energy homesotasis. Signals mainly via beta-arrestin pathway. Binding of RARRES2 activates weakly G proteins, calcium mobilization and MAPK1/MAPK3 (ERK1/2) phosphorylation too. Also acts as a receptor for TAFA1, mediates its effects on neuronal stem-cell proliferation and differentiation via the activation of ROCK/ERK and ROCK/STAT3 signaling pathway. In terms of biological role, (Microbial infection) Coreceptor for HIV-1. This chain is Chemerin-like receptor 2, found in Homo sapiens (Human).